A 201-amino-acid chain; its full sequence is Cytochrome c oxidase assembly protein CtaG (201 aa).

The Cytoplasmic segment spans residues 1–13; it reads MTDQGENEKKQRR. Residues 14-36 form a helical; Signal-anchor for type II membrane protein membrane-spanning segment; the sequence is SNATIAVACLSFFVCMIGAAYAS. Residues 37-201 lie on the Periplasmic side of the membrane; that stretch reads VPLYRIFCQV…KAVGSTRNGG (165 aa).

It belongs to the COX11/CtaG family.

The protein localises to the cell inner membrane. Functionally, exerts its effect at some terminal stage of cytochrome c oxidase synthesis, probably by being involved in the insertion of the copper B into subunit I. The protein is Cytochrome c oxidase assembly protein CtaG of Brucella ovis (strain ATCC 25840 / 63/290 / NCTC 10512).